We begin with the raw amino-acid sequence, 804 residues long: Ribonucleoside-diphosphate reductase large subunit-like protein (804 aa).

It belongs to the ribonucleoside diphosphate reductase large chain family.

Its subcellular location is the virion. It localises to the host cytoplasm. In terms of biological role, does not possess a ribonucleotide reductase activity. Betaherpesviruses probably use another strategy to expand the dNTP pool in a quiescent host cell. The polypeptide is Ribonucleoside-diphosphate reductase large subunit-like protein (Homo sapiens (Human)).